A 338-amino-acid chain; its full sequence is Homoserine kinase (338 aa).

The protein belongs to the GHMP kinase family. Homoserine kinase subfamily.

The catalysed reaction is L-homoserine + ATP = O-phospho-L-homoserine + ADP + H(+). Its pathway is amino-acid biosynthesis; L-threonine biosynthesis; L-threonine from L-aspartate: step 4/5. Functionally, commits homoserine to the threonine biosynthesis pathway by catalyzing its O-phosphorylation. The sequence is that of Homoserine kinase from Schizosaccharomyces pombe (strain 972 / ATCC 24843) (Fission yeast).